Reading from the N-terminus, the 461-residue chain is MAEAAFHPPRRKRRVFECYQAPFPVGPGAGDFRMCRADMVNNCVVVRSPEDMDQLYNKGYFGKGILSRSRPVYSISDPSLVSKWQGANLNVPIITSKKYQQRVQWAKSALQEQGFDGCSVTKILENYTRPLEFPFLEKGGAEQTGDSCDTVCPNTENTELSGQSSTDTGNIATSSPECQKEVCQKAYAEGDPASDSMVGSKEQEPADVKETAQTSCQMHGSCMHCGCKAKGAPDRESCNMAKSRERAPEYVLVQEEEESSLCPEEGSAREQENFVKKEKLVCRRNPFRIFEYLQLSLEEAFFLVYALGCLTVYYGEEPLTILKLWEIFSEVKPSFKTTYMAYHYFRSKGWVPKVGLKYGTDLLLYRKGPPFYHASYSVIAELVDDNFEGSLRRPLSWMSLSGLNRTTVNASKELLLCYLIKPSDMTEEEMATPECLKRIKVQELIVTRWVSSRERSEQDDL.

Disordered stretches follow at residues 140 to 176 (GAEQ…TSSP) and 190 to 210 (GDPA…DVKE). The span at 144–176 (TGDSCDTVCPNTENTELSGQSSTDTGNIATSSP) shows a compositional bias: polar residues. The span at 201 to 210 (KEQEPADVKE) shows a compositional bias: basic and acidic residues. Active-site residues include Tyr-365, His-373, and Lys-412.

It belongs to the tRNA-intron endonuclease family. TRNA splicing endonuclease is a heterotetramer composed of SEN2, SEN15, SEN34/LENG5 and SEN54.

It localises to the nucleus. It carries out the reaction pretRNA = a 3'-half-tRNA molecule with a 5'-OH end + a 5'-half-tRNA molecule with a 2',3'-cyclic phosphate end + an intron with a 2',3'-cyclic phosphate and a 5'-hydroxyl terminus.. Constitutes one of the two catalytic subunit of the tRNA-splicing endonuclease complex, a complex responsible for identification and cleavage of the splice sites in pre-tRNA. It cleaves pre-tRNA at the 5'- and 3'-splice sites to release the intron. The products are an intron and two tRNA half-molecules bearing 2',3'-cyclic phosphate and 5'-OH termini. There are no conserved sequences at the splice sites, but the intron is invariably located at the same site in the gene, placing the splice sites an invariant distance from the constant structural features of the tRNA body. Probably carries the active site for 5'-splice site cleavage. The tRNA splicing endonuclease is also involved in mRNA processing via its association with pre-mRNA 3'-end processing factors, establishing a link between pre-tRNA splicing and pre-mRNA 3'-end formation, suggesting that the endonuclease subunits function in multiple RNA-processing events. The protein is tRNA-splicing endonuclease subunit Sen2 (TSEN2) of Gallus gallus (Chicken).